We begin with the raw amino-acid sequence, 399 residues long: Tryptophan synthase beta chain (399 aa).

The residue at position 86 (Lys-86) is an N6-(pyridoxal phosphate)lysine.

It belongs to the TrpB family. As to quaternary structure, tetramer of two alpha and two beta chains. Pyridoxal 5'-phosphate serves as cofactor.

It catalyses the reaction (1S,2R)-1-C-(indol-3-yl)glycerol 3-phosphate + L-serine = D-glyceraldehyde 3-phosphate + L-tryptophan + H2O. It functions in the pathway amino-acid biosynthesis; L-tryptophan biosynthesis; L-tryptophan from chorismate: step 5/5. The beta subunit is responsible for the synthesis of L-tryptophan from indole and L-serine. This chain is Tryptophan synthase beta chain (trpB), found in Buchnera aphidicola subsp. Schizaphis graminum (strain Sg).